The following is a 183-amino-acid chain: Inner membrane-spanning protein YciB (183 aa).

Helical transmembrane passes span 22–44 (IYTA…WVRY), 54–74 (TFLL…DAFI), 76–96 (WKVT…RYGF), 119–139 (VNLA…YVAF), and 149–169 (FKVF…GVYL).

This sequence belongs to the YciB family.

Its subcellular location is the cell inner membrane. Functionally, plays a role in cell envelope biogenesis, maintenance of cell envelope integrity and membrane homeostasis. This Aeromonas salmonicida (strain A449) protein is Inner membrane-spanning protein YciB.